Consider the following 150-residue polypeptide: Large ribosomal subunit protein bL9 (150 aa).

This sequence belongs to the bacterial ribosomal protein bL9 family.

Binds to the 23S rRNA. This Corynebacterium jeikeium (strain K411) protein is Large ribosomal subunit protein bL9.